Consider the following 166-residue polypeptide: Endoribonuclease YbeY (166 aa).

Positions 136, 140, and 146 each coordinate Zn(2+).

The protein belongs to the endoribonuclease YbeY family. Zn(2+) is required as a cofactor.

Its subcellular location is the cytoplasm. Single strand-specific metallo-endoribonuclease involved in late-stage 70S ribosome quality control and in maturation of the 3' terminus of the 16S rRNA. In Synechococcus sp. (strain CC9605), this protein is Endoribonuclease YbeY.